We begin with the raw amino-acid sequence, 66 residues long: Type 3 secretion system chaperone YscE (66 aa).

Belongs to the YscE family. As to quaternary structure, component of the heterodimeric YscE-YscG chaperone. The YscE-YscG chaperone forms a stable ternary complex with YscF/SctF.

Its subcellular location is the cytoplasm. Its function is as follows. Chaperone of the type III secretion system (T3SS), also called injectisome, which is used to inject bacterial effector proteins into eukaryotic host cells. Along with YscG, prevents premature polymerization of the YscF/SctF needle protein within the cytoplasm. Required for Yop secretion. This is Type 3 secretion system chaperone YscE from Yersinia enterocolitica.